Here is a 352-residue protein sequence, read N- to C-terminus: Ferrochelatase (352 aa).

Fe cation-binding residues include histidine 222 and glutamate 303.

It belongs to the ferrochelatase family.

It is found in the cytoplasm. The catalysed reaction is heme b + 2 H(+) = protoporphyrin IX + Fe(2+). The protein operates within porphyrin-containing compound metabolism; protoheme biosynthesis; protoheme from protoporphyrin-IX: step 1/1. Functionally, catalyzes the ferrous insertion into protoporphyrin IX. This is Ferrochelatase from Brucella canis (strain ATCC 23365 / NCTC 10854 / RM-666).